A 226-amino-acid polypeptide reads, in one-letter code: Triosephosphate isomerase (226 aa).

Residue His91 is the Electrophile of the active site. Residue Glu163 is the Proton acceptor of the active site. Substrate-binding residues include Gly169 and Ser207.

This sequence belongs to the triosephosphate isomerase family. In terms of assembly, homodimer.

The protein resides in the cytoplasm. The catalysed reaction is D-glyceraldehyde 3-phosphate = dihydroxyacetone phosphate. The protein operates within carbohydrate biosynthesis; gluconeogenesis. It participates in carbohydrate degradation; glycolysis; D-glyceraldehyde 3-phosphate from glycerone phosphate: step 1/1. Functionally, involved in the gluconeogenesis. Catalyzes stereospecifically the conversion of dihydroxyacetone phosphate (DHAP) to D-glyceraldehyde-3-phosphate (G3P). This chain is Triosephosphate isomerase, found in Rhizobium etli (strain ATCC 51251 / DSM 11541 / JCM 21823 / NBRC 15573 / CFN 42).